The chain runs to 506 residues: EPTC-inducible aldehyde dehydrogenase (506 aa).

219 to 225 (GFGVEAG) lines the NAD(+) pocket. Residues E263 and C302 contribute to the active site.

The protein belongs to the aldehyde dehydrogenase family.

The enzyme catalyses an aldehyde + NAD(+) + H2O = a carboxylate + NADH + 2 H(+). Degrades all aldehydes potentially generated by N dealkylation of thiocarbamates and may also participate in ethanolamine metabolism and further assimilation of degradation products by thiocarbamate-induced cytochrome P-450. The chain is EPTC-inducible aldehyde dehydrogenase (thcA) from Rhodococcus erythropolis (Arthrobacter picolinophilus).